The chain runs to 65 residues: Large ribosomal subunit protein bL35 (65 aa).

The tract at residues 30–65 is disordered; sequence AFRSHLAQNKSTKQKRQSKHGTFMHPTDYKRLKDLM. Basic and acidic residues predominate over residues 56–65; sequence TDYKRLKDLM.

It belongs to the bacterial ribosomal protein bL35 family.

The chain is Large ribosomal subunit protein bL35 from Mycoplasma mobile (strain ATCC 43663 / 163K / NCTC 11711) (Mesomycoplasma mobile).